Here is a 177-residue protein sequence, read N- to C-terminus: Large ribosomal subunit protein uL6 (177 aa).

Belongs to the universal ribosomal protein uL6 family. Part of the 50S ribosomal subunit.

Its function is as follows. This protein binds to the 23S rRNA, and is important in its secondary structure. It is located near the subunit interface in the base of the L7/L12 stalk, and near the tRNA binding site of the peptidyltransferase center. In Stutzerimonas stutzeri (strain A1501) (Pseudomonas stutzeri), this protein is Large ribosomal subunit protein uL6.